Here is a 746-residue protein sequence, read N- to C-terminus: PAN2-PAN3 deadenylation complex subunit pan3 (746 aa).

The segment at 7-35 (PKNQKQCKNIALHGYCRNSDKCEFSHELT) adopts a C3H1-type zinc-finger fold. Positions 64-97 (QQQQQQQNSNGNGSNNTATSNNPIISPNSNIASP) are enriched in low complexity. Disordered stretches follow at residues 64–100 (QQQQ…PLKK), 169–205 (DDQH…NMNN), and 219–275 (NASP…PSLQ). Over residues 196–205 (NNGIDPNMNN) the composition is skewed to polar residues. A compositionally biased stretch (low complexity) spans 221 to 275 (SPQSYQQQFQQPNPSPQSSSQQQQQQQQQQQQAVYQQQQQQQPSSQPLAQNPSLQ). The interval 351-610 (DPNDPRIKNI…NIDEVVLMIS (260 aa)) is pseudokinase domain. Residues arginine 407, 457–464 (EFFPGSET), and 509–510 (SK) each bind ATP. Residues 611 to 649 (GRLLQENNYLHTYTDDLETELSKEYENGRLFRLVTKLGF) are a coiled coil. The segment at 650–746 (INERPLYDMD…SELVSQKSHI (97 aa)) is knob domain.

This sequence belongs to the protein kinase superfamily. PAN3 family. As to quaternary structure, homodimer. Forms a heterotrimer with a catalytic subunit PAN2 to form the poly(A)-nuclease (PAN) deadenylation complex. Interacts (via PAM-2 motif) with poly(A)-binding protein (via PABC domain), conferring substrate specificity of the enzyme complex.

It localises to the cytoplasm. Functionally, regulatory subunit of the poly(A)-nuclease (PAN) deadenylation complex, one of two cytoplasmic mRNA deadenylases involved in mRNA turnover. PAN specifically shortens poly(A) tails of RNA and the activity is stimulated by poly(A)-binding protein (PABP). PAN deadenylation is followed by rapid degradation of the shortened mRNA tails by the CCR4-NOT complex. Deadenylated mRNAs are then degraded by two alternative mechanisms, namely exosome-mediated 3'-5' exonucleolytic degradation, or deadenylation-dependent mRNA decaping and subsequent 5'-3' exonucleolytic degradation by XRN1. PAN3 acts as a positive regulator for PAN activity, recruiting the catalytic subunit PAN2 to mRNA via its interaction with RNA and PABP. The polypeptide is PAN2-PAN3 deadenylation complex subunit pan3 (Dictyostelium discoideum (Social amoeba)).